Consider the following 578-residue polypeptide: 2-hydroxyacyl-CoA lyase 1 (578 aa).

Ser4 is modified (phosphoserine). Glu60 lines the thiamine diphosphate pocket. N6-succinyllysine occurs at positions 351, 358, and 365. Residues 401–486 (TMDIGRTVLQ…LLVVNNNGIY (86 aa)) form a thiamine pyrophosphate binding region. 2 residues coordinate Mg(2+): Asp455 and Asn482. A Microbody targeting signal motif is present at residues 576–578 (SNM).

The protein belongs to the TPP enzyme family. In terms of assembly, homotetramer. Requires Mg(2+) as cofactor. The cofactor is thiamine diphosphate. In terms of tissue distribution, widely expressed.

It is found in the peroxisome. It catalyses the reaction a 2-hydroxy-3-methyl fatty acyl-CoA = a 2-methyl-branched fatty aldehyde + formyl-CoA. The enzyme catalyses an (R)-2-hydroxy-long-chain-fatty acyl-CoA = a long-chain fatty aldehyde + formyl-CoA. The catalysed reaction is 2-hydroxy-3-methylhexadecanoyl-CoA = 2-methylpentadecanal + formyl-CoA. It carries out the reaction 2-hydroxyoctadecanoyl-CoA = heptadecanal + formyl-CoA. It catalyses the reaction 2-hydroxyphytanoyl-CoA = 2,6,10,14-tetramethylpentadecanal + formyl-CoA. Its pathway is lipid metabolism; fatty acid metabolism. In terms of biological role, peroxisomal 2-OH acyl-CoA lyase involved in the cleavage (C1 removal) reaction in the fatty acid alpha-oxydation in a thiamine pyrophosphate (TPP)-dependent manner. Involved in the degradation of 3-methyl-branched fatty acids like phytanic acid and the shortening of 2-hydroxy long-chain fatty acids. Plays a significant role in the biosynthesis of heptadecanal in the liver. The polypeptide is 2-hydroxyacyl-CoA lyase 1 (Homo sapiens (Human)).